The primary structure comprises 195 residues: CASP-like protein IN26 (195 aa).

The Cytoplasmic segment spans residues 1–26; it reads VAPTGSVETEKAGPSYKPKEYYKVTE. Residues 27 to 47 traverse the membrane as a helical segment; that stretch reads AILRLLLLASLVVAVVVMVTS. Residues 48-75 are Extracellular-facing; the sequence is KETELISVKLDPFPPFMLPLTAKFTQSP. A helical membrane pass occupies residues 76 to 96; that stretch reads AFIYFVAGLSVAGLYTIISTL. Over 97–120 the chain is Cytoplasmic; that stretch reads ASFYNLLIKPGFCPALVSHFIILD. A helical transmembrane segment spans residues 121-143; that stretch reads VVMLGIVGTATGAAGGVAYIGLK. Over 144–163 the chain is Extracellular; sequence GNSHVGWTKVCNKYGKLCTH. The chain crosses the membrane as a helical span at residues 164–184; it reads LGASLAVSFFAFIVLLLLIIL. Residues 185 to 195 are Cytoplasmic-facing; sequence SIHSLSKKIPK.

It belongs to the Casparian strip membrane proteins (CASP) family. In terms of assembly, homodimer and heterodimers.

Its subcellular location is the cell membrane. This is CASP-like protein IN26 (IN26) from Ipomoea nil (Japanese morning glory).